Here is a 352-residue protein sequence, read N- to C-terminus: Phosphate acetyltransferase (352 aa).

This sequence belongs to the phosphate acetyltransferase and butyryltransferase family.

It is found in the cytoplasm. The enzyme catalyses acetyl-CoA + phosphate = acetyl phosphate + CoA. Its pathway is metabolic intermediate biosynthesis; acetyl-CoA biosynthesis; acetyl-CoA from acetate: step 2/2. The polypeptide is Phosphate acetyltransferase (pta) (Borreliella burgdorferi (strain ATCC 35210 / DSM 4680 / CIP 102532 / B31) (Borrelia burgdorferi)).